The primary structure comprises 64 residues: Large ribosomal subunit protein eL37 (64 aa).

Residues Cys-20, Cys-23, Cys-35, and Cys-38 each coordinate Zn(2+). The segment at 20–38 (CRRCGRRAFHVRKKVCAAC) adopts a C4-type zinc-finger fold.

Belongs to the eukaryotic ribosomal protein eL37 family. It depends on Zn(2+) as a cofactor.

Its function is as follows. Binds to the 23S rRNA. This Methanococcus maripaludis (strain DSM 14266 / JCM 13030 / NBRC 101832 / S2 / LL) protein is Large ribosomal subunit protein eL37.